Here is a 591-residue protein sequence, read N- to C-terminus: PE-PGRS family protein PE_PGRS5 (591 aa).

Positions 1-93 (MSFVIAQPEM…AGAYASAEAA (93 aa)) constitute a PE domain. The PGRS stretch occupies residues 94–591 (NAGPNMLAAV…GGKGNNGNPG (498 aa)). Gly residues-rich tracts occupy residues 303-324 (GAGGAGGAGGDGAPGGNGGNGG), 336-363 (ASGGNGATGGNGGVGAPGGAGGNGGHVS), 371-412 (GAGG…GDGG), 477-491 (SEAGDGGKGGLGGDG), 539-567 (AGTGGDGGVGGTGAAGGKGGAGGSGGVNG), and 579-591 (GATGGKGNNGNPG). 3 disordered regions span residues 303–412 (GAGG…GDGG), 468–491 (GSVNTPIGGSEAGDGGKGGLGGDG), and 539–591 (AGTG…GNPG).

The protein belongs to the mycobacterial PE family. PGRS subfamily. In terms of assembly, interacts with human TLR4.

The protein resides in the host endoplasmic reticulum. In terms of biological role, involved in endoplasmic reticulum (ER) stress-mediated apoptosis through human Toll-like receptor 4 (TLR4) signaling pathway. Localizes to the host ER, leading to ER stress, disruption of intracellular Ca(2+) homeostasis and increase of nitric oxide (NO) and reactive oxygen species (ROS) levels. Stress response results in caspase-8 activation and apoptosis of macrophage cells. Apoptosis may lead to dissemination of the bacteria, thereby spreading the disease. This chain is PE-PGRS family protein PE_PGRS5, found in Mycobacterium tuberculosis (strain ATCC 25618 / H37Rv).